A 161-amino-acid chain; its full sequence is Regulator of ribonuclease activity A (161 aa).

It belongs to the RraA family. As to quaternary structure, homotrimer. Binds to both RNA-binding sites in the C-terminal region of Rne and to RhlB.

Its subcellular location is the cytoplasm. Globally modulates RNA abundance by binding to RNase E (Rne) and regulating its endonucleolytic activity. Can modulate Rne action in a substrate-dependent manner by altering the composition of the degradosome. Modulates RNA-binding and helicase activities of the degradosome. The sequence is that of Regulator of ribonuclease activity A from Edwardsiella ictaluri (strain 93-146).